The primary structure comprises 129 residues: Glycine cleavage system H protein (129 aa).

The region spanning 24-106 (IATIGISAFA…YGEGWLVKVR (83 aa)) is the Lipoyl-binding domain. An N6-lipoyllysine modification is found at lysine 65.

This sequence belongs to the GcvH family. As to quaternary structure, the glycine cleavage system is composed of four proteins: P, T, L and H. (R)-lipoate serves as cofactor.

In terms of biological role, the glycine cleavage system catalyzes the degradation of glycine. The H protein shuttles the methylamine group of glycine from the P protein to the T protein. The protein is Glycine cleavage system H protein of Cyanothece sp. (strain PCC 7425 / ATCC 29141).